Here is a 555-residue protein sequence, read N- to C-terminus: GPI-anchor transamidase component PIGS (555 aa).

Residues 2 to 18 (AAAGAAATHLEVARGKR) are Cytoplasmic-facing. A cardiolipin is bound by residues Arg-15 and Arg-18. Residues 19–39 (AALFFAAVAIVLGLPLWWKTT) traverse the membrane as a helical segment. Topologically, residues 40–517 (ETYRASLPYS…LHLLYFPDDQ (478 aa)) are lumenal. N-linked (GlcNAc...) asparagine glycans are attached at residues Asn-267 and Asn-370. The helical transmembrane segment at 518–532 (KFAIYIPLFLPMAVP) threads the bilayer. Residues 533–555 (ILLSLVKIFLETRKSWRKPEKTD) lie on the Cytoplasmic side of the membrane.

This sequence belongs to the PIGS family. Heteropentamer. Part of the GPI-anchor transamidase complex, consisting of PIGK, PIGT, PIGS, PIGU and GAA1.

The protein resides in the endoplasmic reticulum membrane. It functions in the pathway glycolipid biosynthesis; glycosylphosphatidylinositol-anchor biosynthesis. Component of the glycosylphosphatidylinositol-anchor (GPI-anchor) transamidase (GPI-T) complex that catalyzes the formation of the linkage between a proprotein and a GPI-anchor and participates in GPI anchored protein biosynthesis. The protein is GPI-anchor transamidase component PIGS of Homo sapiens (Human).